The sequence spans 333 residues: Complement C1q and tumor necrosis factor-related protein 9 (333 aa).

A signal peptide spans 1-19 (MRIWWLLLVMGACTRSVFS). Residues 22-194 (TCRQGHSGIP…GDRGEKGKVG (173 aa)) are disordered. Collagen-like domains lie at 24 to 82 (RQGH…DGRV), 84 to 130 (AKGI…KGEV), and 134 to 193 (GPEG…KGKV). 3 positions are modified to 4-hydroxyproline: proline 31, proline 34, and proline 40. A compositionally biased stretch (basic and acidic residues) spans 42-57 (RDGRDGAKGDKGDAGE). A 4-hydroxyproline mark is found at proline 58, proline 61, and proline 64. Over residues 67–88 (DGIRGEKGEPGADGRVEAKGIK) the composition is skewed to basic and acidic residues. Lysine 73 is modified (5-hydroxylysine). An O-linked (Gal...) hydroxylysine glycan is attached at lysine 73. Residues proline 76 and proline 115 each carry the 4-hydroxyproline modification. 5-hydroxylysine is present on lysine 127. Lysine 127 carries O-linked (Gal...) hydroxylysine glycosylation. 4-hydroxyproline is present on residues proline 151, proline 160, and proline 175. Residues 183–193 (WKGDRGEKGKV) are compositionally biased toward basic and acidic residues. Positions 197–333 (PLVPKSAFTV…FTGFLLFSSS (137 aa)) constitute a C1q domain.

Multimers (predominantly trimers). Interacts with ADIPOQ via the C1q domain to form a heterotrimeric complex. Post-translationally, the isomeric forms of the hydroxylated amino acids could not be determined in the mass-spectrometric methods reported in PubMed:18787108 but are assumed on the basis of their occurrence in collagen-like domains. As to expression, expressed predominantly in adipose tissue. Females express higher levels than males.

It is found in the secreted. Its function is as follows. Probable adipokine. Activates AMPK, AKT, and p44/42 MAPK signaling pathways. The protein is Complement C1q and tumor necrosis factor-related protein 9 (C1qtnf9) of Mus musculus (Mouse).